Consider the following 266-residue polypeptide: Cyclin-C (266 aa).

The Cyclin N-terminal domain maps to 47–151 (IIQVLGEQLK…LLENLDCCLI (105 aa)).

The protein belongs to the cyclin family. Cyclin C subfamily. In terms of assembly, component of the Cdk8 module of the Mediator complex.

It is found in the nucleus. In terms of biological role, component of the Mediator complex, a coactivator involved in regulated gene transcription of nearly all RNA polymerase II-dependent genes. Mediator functions as a bridge to convey information from gene-specific regulatory proteins to the basal RNA polymerase II transcription machinery. Mediator is recruited to promoters by direct interactions with regulatory proteins and serves as a scaffold for the assembly of a functional preinitiation complex with RNA polymerase II and the general transcription factors. Binds to and activates cyclin-dependent kinase Cdk8 that phosphorylates the CTD (C-terminal domain) of the large subunit of RNA polymerase II (RNAp II), which may inhibit the formation of a transcription initiation complex. This Anopheles gambiae (African malaria mosquito) protein is Cyclin-C (CycC).